The following is a 144-amino-acid chain: Large ribosomal subunit protein uL15 (144 aa).

Residues 20–49 (GRGIGSGLGKTGGRGHKGQKSRSGGFHKVG) form a disordered region. Over residues 21–31 (RGIGSGLGKTG) the composition is skewed to gly residues.

This sequence belongs to the universal ribosomal protein uL15 family. As to quaternary structure, part of the 50S ribosomal subunit.

Binds to the 23S rRNA. The polypeptide is Large ribosomal subunit protein uL15 (Neisseria meningitidis serogroup A / serotype 4A (strain DSM 15465 / Z2491)).